We begin with the raw amino-acid sequence, 127 residues long: Glycine cleavage system H protein (127 aa).

The region spanning 22-104 (EAVIGITQFA…YTDGWMVRVK (83 aa)) is the Lipoyl-binding domain. N6-lipoyllysine is present on K63.

The protein belongs to the GcvH family. As to quaternary structure, the glycine cleavage system is composed of four proteins: P, T, L and H. The cofactor is (R)-lipoate.

The glycine cleavage system catalyzes the degradation of glycine. The H protein shuttles the methylamine group of glycine from the P protein to the T protein. The protein is Glycine cleavage system H protein of Nitratidesulfovibrio vulgaris (strain DSM 19637 / Miyazaki F) (Desulfovibrio vulgaris).